The following is a 181-amino-acid chain: uncharacterized protein (181 aa).

This is an uncharacterized protein from Rickettsia prowazekii (strain Madrid E).